The following is a 448-amino-acid chain: Trigger factor (448 aa).

The region spanning 172 to 257 (GDRVTVDFVG…MKKIEWPHLP (86 aa)) is the PPIase FKBP-type domain.

Belongs to the FKBP-type PPIase family. Tig subfamily.

The protein localises to the cytoplasm. The enzyme catalyses [protein]-peptidylproline (omega=180) = [protein]-peptidylproline (omega=0). Functionally, involved in protein export. Acts as a chaperone by maintaining the newly synthesized protein in an open conformation. Functions as a peptidyl-prolyl cis-trans isomerase. This Burkholderia orbicola (strain MC0-3) protein is Trigger factor.